Consider the following 258-residue polypeptide: TLC domain-containing protein 4-A (258 aa).

Transmembrane regions (helical) follow at residues leucine 5–isoleucine 25, phenylalanine 52–aspartate 72, phenylalanine 85–leucine 105, tyrosine 116–leucine 132, proline 171–isoleucine 191, and isoleucine 212–tryptophan 232. The 203-residue stretch at glycine 43 to lysine 245 folds into the TLC domain.

Belongs to the TLCD4 family.

Its subcellular location is the membrane. This is TLC domain-containing protein 4-A (tlcd4-a) from Xenopus laevis (African clawed frog).